We begin with the raw amino-acid sequence, 151 residues long: Small ribosomal subunit protein uS19 (151 aa).

Ala2 carries the N-acetylalanine modification.

It belongs to the universal ribosomal protein uS19 family.

In terms of biological role, negatively regulates lifespan. This chain is Small ribosomal subunit protein uS19, found in Caenorhabditis elegans.